The sequence spans 199 residues: MARTPNTDRRQRGGDDQRNRSPRSDERDEEFLDKLVHINRVAKVVKGGRRFAFAALVVVGDGKGRVGFGTGKAREVPEAIRKATDQAKRTMIKVPLREGRTLHHDTNGHFGAGWVTLRSAPAGTGIISGGPMRAVFETMGVQDVVGKCTGTTNPYNMIKATFDALVNSQAPRQVAARRGKKVGDIVARRDGAAAAGATE.

Positions 1 to 28 are disordered; sequence MARTPNTDRRQRGGDDQRNRSPRSDERD. Residues 31–94 enclose the S5 DRBM domain; it reads FLDKLVHINR…DQAKRTMIKV (64 aa).

This sequence belongs to the universal ribosomal protein uS5 family. In terms of assembly, part of the 30S ribosomal subunit. Contacts proteins S4 and S8.

Functionally, with S4 and S12 plays an important role in translational accuracy. Located at the back of the 30S subunit body where it stabilizes the conformation of the head with respect to the body. The polypeptide is Small ribosomal subunit protein uS5 (Rhodospirillum rubrum (strain ATCC 11170 / ATH 1.1.1 / DSM 467 / LMG 4362 / NCIMB 8255 / S1)).